A 160-amino-acid polypeptide reads, in one-letter code: Cytochrome b6-f complex subunit 4 (160 aa).

3 consecutive transmembrane segments (helical) span residues 36 to 56, 95 to 115, and 131 to 151; these read LLYI…GLAV, LLGV…PFLE, and TVFL…TLPI.

Belongs to the cytochrome b family. PetD subfamily. In terms of assembly, the 4 large subunits of the cytochrome b6-f complex are cytochrome b6, subunit IV (17 kDa polypeptide, petD), cytochrome f and the Rieske protein, while the 4 small subunits are petG, petL, petM and petN. The complex functions as a dimer.

Its subcellular location is the plastid. It localises to the chloroplast thylakoid membrane. Its function is as follows. Component of the cytochrome b6-f complex, which mediates electron transfer between photosystem II (PSII) and photosystem I (PSI), cyclic electron flow around PSI, and state transitions. In Coffea arabica (Arabian coffee), this protein is Cytochrome b6-f complex subunit 4.